A 324-amino-acid polypeptide reads, in one-letter code: tRNA uridine(34) hydroxylase (324 aa).

One can recognise a Rhodanese domain in the interval 127–221 (QQEETIVIDA…YGKDPEVQGE (95 aa)). Cys181 functions as the Cysteine persulfide intermediate in the catalytic mechanism.

It belongs to the TrhO family.

It catalyses the reaction uridine(34) in tRNA + AH2 + O2 = 5-hydroxyuridine(34) in tRNA + A + H2O. Its function is as follows. Catalyzes oxygen-dependent 5-hydroxyuridine (ho5U) modification at position 34 in tRNAs. This chain is tRNA uridine(34) hydroxylase, found in Bacillus cytotoxicus (strain DSM 22905 / CIP 110041 / 391-98 / NVH 391-98).